A 299-amino-acid polypeptide reads, in one-letter code: Polyamine aminopropyltransferase (299 aa).

Residues 6–252 (IVLLFALLCT…SLPNQQALQQ (247 aa)) enclose the PABS domain. Residues Gln-36, Glu-120, and 147 to 148 (DA) contribute to the S-methyl-5'-thioadenosine site. Asp-168 (proton acceptor) is an active-site residue.

Belongs to the spermidine/spermine synthase family. As to quaternary structure, homodimer or homotetramer.

The protein localises to the cytoplasm. It carries out the reaction S-adenosyl 3-(methylsulfanyl)propylamine + putrescine = S-methyl-5'-thioadenosine + spermidine + H(+). It participates in amine and polyamine biosynthesis; spermidine biosynthesis; spermidine from putrescine: step 1/1. In terms of biological role, catalyzes the irreversible transfer of a propylamine group from the amino donor S-adenosylmethioninamine (decarboxy-AdoMet) to putrescine (1,4-diaminobutane) to yield spermidine. The chain is Polyamine aminopropyltransferase from Vibrio vulnificus (strain CMCP6).